Reading from the N-terminus, the 553-residue chain is Glutamyl-tRNA(Gln) amidotransferase subunit B, mitochondrial (553 aa).

A mitochondrion-targeting transit peptide spans 1 to 18 (MAASTSGYSGVLFRLRKY).

This sequence belongs to the GatB/GatE family. GatB subfamily. Subunit of the heterotrimeric GatCAB amidotransferase (AdT) complex, composed of A (qrsl1), B (gatb) and C (gatc) subunits.

The protein resides in the mitochondrion. The enzyme catalyses L-glutamyl-tRNA(Gln) + L-glutamine + ATP + H2O = L-glutaminyl-tRNA(Gln) + L-glutamate + ADP + phosphate + H(+). Its function is as follows. Allows the formation of correctly charged Gln-tRNA(Gln) through the transamidation of misacylated Glu-tRNA(Gln) in the mitochondria. The reaction takes place in the presence of glutamine and ATP through an activated gamma-phospho-Glu-tRNA(Gln). This chain is Glutamyl-tRNA(Gln) amidotransferase subunit B, mitochondrial, found in Danio rerio (Zebrafish).